A 124-amino-acid chain; its full sequence is LOB domain-containing protein 9 (124 aa).

The LOB domain maps to 11–113 (APCALCTTKN…IYLNELKEKI (103 aa)).

Belongs to the LOB domain-containing protein family.

The chain is LOB domain-containing protein 9 (LBD9) from Arabidopsis thaliana (Mouse-ear cress).